We begin with the raw amino-acid sequence, 323 residues long: Pyruvate dehydrogenase E1 component subunit beta (323 aa).

Glutamate 60 lines the thiamine diphosphate pocket. Positions 113, 161, 162, 164, and 166 each coordinate K(+).

As to quaternary structure, heterodimer of an alpha and a beta chain. The cofactor is thiamine diphosphate.

The protein localises to the plastid. The protein resides in the chloroplast. It catalyses the reaction N(6)-[(R)-lipoyl]-L-lysyl-[protein] + pyruvate + H(+) = N(6)-[(R)-S(8)-acetyldihydrolipoyl]-L-lysyl-[protein] + CO2. Functionally, the pyruvate dehydrogenase complex catalyzes the overall conversion of pyruvate to acetyl-CoA and CO(2). It contains multiple copies of three enzymatic components: pyruvate dehydrogenase (E1), dihydrolipoamide acetyltransferase (E2) and lipoamide dehydrogenase (E3). The chain is Pyruvate dehydrogenase E1 component subunit beta (pdhB) from Gracilaria tenuistipitata var. liui (Red alga).